Consider the following 86-residue polypeptide: MKTLLLSLVVVTIVCLDLGYTRLCLSDYSIFSETIEICPDGHNFCFKKFPKGITRLPWVIRGCAATCPKAEARVYVDCCARDKCNR.

The signal sequence occupies residues 1 to 21; the sequence is MKTLLLSLVVVTIVCLDLGYT. 4 disulfide bridges follow: C24–C45, C38–C63, C67–C78, and C79–C84.

Belongs to the three-finger toxin family. Short-chain subfamily. Orphan group I sub-subfamily. Expressed by the venom gland.

It localises to the secreted. The sequence is that of Neurotoxin-like protein NTL2 from Naja atra (Chinese cobra).